The chain runs to 183 residues: Adenine phosphoribosyltransferase (183 aa).

Belongs to the purine/pyrimidine phosphoribosyltransferase family. As to quaternary structure, homodimer.

The protein resides in the cytoplasm. It catalyses the reaction AMP + diphosphate = 5-phospho-alpha-D-ribose 1-diphosphate + adenine. It functions in the pathway purine metabolism; AMP biosynthesis via salvage pathway; AMP from adenine: step 1/1. Catalyzes a salvage reaction resulting in the formation of AMP, that is energically less costly than de novo synthesis. The chain is Adenine phosphoribosyltransferase from Corynebacterium kroppenstedtii (strain DSM 44385 / JCM 11950 / CIP 105744 / CCUG 35717).